The sequence spans 106 residues: Cyclin-dependent protein kinase inhibitor SMR15 (106 aa).

Its function is as follows. Probable cyclin-dependent protein kinase (CDK) inhibitor that functions as a repressor of mitosis in the endoreduplication cell cycle. This chain is Cyclin-dependent protein kinase inhibitor SMR15, found in Arabidopsis thaliana (Mouse-ear cress).